Consider the following 140-residue polypeptide: MNRIMGIDYGLKRIGIAITDFLRITASPFDTVKNVSLKKNALKILEIAKNRDVSIIVLGLPLNMNGTEGGMAETVRKFIEKIKFLSDIEVTTVDERLTTVQAERMLIEEADISREKRKGIKDKVVAALILQTYLDIQSDE.

The protein belongs to the YqgF nuclease family.

It localises to the cytoplasm. In terms of biological role, could be a nuclease involved in processing of the 5'-end of pre-16S rRNA. This chain is Putative pre-16S rRNA nuclease, found in Endomicrobium trichonymphae.